Here is a 314-residue protein sequence, read N- to C-terminus: tRNA dimethylallyltransferase (314 aa).

The tract at residues 1–25 (MAEEPQRSPAPTSPFAFTVPSNSLS) is disordered. Residue 40–47 (GPTASGKS) coordinates ATP. 42-47 (TASGKS) lines the substrate pocket.

It belongs to the IPP transferase family. Monomer. It depends on Mg(2+) as a cofactor.

The catalysed reaction is adenosine(37) in tRNA + dimethylallyl diphosphate = N(6)-dimethylallyladenosine(37) in tRNA + diphosphate. In terms of biological role, catalyzes the transfer of a dimethylallyl group onto the adenine at position 37 in tRNAs that read codons beginning with uridine, leading to the formation of N6-(dimethylallyl)adenosine (i(6)A). The chain is tRNA dimethylallyltransferase from Cereibacter sphaeroides (strain ATCC 17023 / DSM 158 / JCM 6121 / CCUG 31486 / LMG 2827 / NBRC 12203 / NCIMB 8253 / ATH 2.4.1.) (Rhodobacter sphaeroides).